Reading from the N-terminus, the 208-residue chain is Ras-related protein Rab6 (208 aa).

19–27 (GEQSVGKTS) is a GTP binding site. The Effector region motif lies at 41 to 49 (YQATIGIDF). Residues 67–71 (DTAGQ), 125–128 (NKTD), and 155–157 (SAK) each bind GTP. Positions 176 to 208 (MDSTENKPSEDMQEVVLKDSPNETKDPEGGCAC) are disordered. The span at 179–208 (TENKPSEDMQEVVLKDSPNETKDPEGGCAC) shows a compositional bias: basic and acidic residues.

It belongs to the small GTPase superfamily. Rab family. As to quaternary structure, interacts with Rich and Act5C. Interacts with BicD (via C-terminal domain). Interacts (in GTP-bound) with GCC1/CG10703 and cbs. Interacts with Gorab (via C-terminus); binds to a Gorab homodimer, this interaction seems to be required for trans-Golgi localization of Gorab. Expressed in larval eye, wing and leg imaginal disks and in salivary gland. Expressed in the larval optic lobe, showing an enrichment in the neuropil. In the adult brain, expressed in photoreceptors and mushroom body.

The protein resides in the golgi apparatus membrane. It is found in the synapse. Its subcellular location is the perikaryon. Its function is as follows. Protein transport. Regulator of membrane traffic from the Golgi apparatus towards the endoplasmic reticulum (ER). Mediates membrane trafficking during egg chamber growth and organization, possibly upstream of exocyst component Sec5. Also during oogenesis, plays a role, together with BicD but independently of Sec5, in the polarization of the oocyte microtubule cytoskeleton, in the localization of oskar mRNA and in the anterodorsal secretion of grk. Required for anterograde opsin transport through the ER-Golgi complex. Plays a role, together with Rich, in regulating CadN transport in photoreceptor cells which is required for the formation of normal synaptic connections between axons from the inner photoreceptor cells in the eye and postsynaptic cells in the brain medulla layer M6. Necessary for proper development of bristle shafts of macrochaete and microchaete on the head, thorax and scutellum. Modulates Notch signaling. As a key regulator of vesicular traffic, plays a critical role in the regulation of actin organization and is required for normal rates of phagocytic uptake during phagocytosis involved in defense against viral and fungal infection. The polypeptide is Ras-related protein Rab6 (Drosophila melanogaster (Fruit fly)).